The following is a 391-amino-acid chain: 8-amino-7-oxononanoate synthase 1 (391 aa).

108–109 (GF) is a pyridoxal 5'-phosphate binding site. Substrate is bound at residue H133. Residues S180, 205-208 (DDAH), and 236-239 (TLSK) each bind pyridoxal 5'-phosphate. Residue K239 is modified to N6-(pyridoxal phosphate)lysine. A substrate-binding site is contributed by T353.

It belongs to the class-II pyridoxal-phosphate-dependent aminotransferase family. BioF subfamily. Homodimer. The cofactor is pyridoxal 5'-phosphate.

The enzyme catalyses 6-carboxyhexanoyl-[ACP] + L-alanine + H(+) = (8S)-8-amino-7-oxononanoate + holo-[ACP] + CO2. It participates in cofactor biosynthesis; biotin biosynthesis. In terms of biological role, catalyzes the decarboxylative condensation of pimeloyl-[acyl-carrier protein] and L-alanine to produce 8-amino-7-oxononanoate (AON), [acyl-carrier protein], and carbon dioxide. The sequence is that of 8-amino-7-oxononanoate synthase 1 from Bacillus velezensis (strain DSM 23117 / BGSC 10A6 / LMG 26770 / FZB42) (Bacillus amyloliquefaciens subsp. plantarum).